We begin with the raw amino-acid sequence, 188 residues long: Elongation factor P (188 aa).

The protein belongs to the elongation factor P family.

It is found in the cytoplasm. It functions in the pathway protein biosynthesis; polypeptide chain elongation. Its function is as follows. Involved in peptide bond synthesis. Stimulates efficient translation and peptide-bond synthesis on native or reconstituted 70S ribosomes in vitro. Probably functions indirectly by altering the affinity of the ribosome for aminoacyl-tRNA, thus increasing their reactivity as acceptors for peptidyl transferase. The chain is Elongation factor P from Aeromonas hydrophila subsp. hydrophila (strain ATCC 7966 / DSM 30187 / BCRC 13018 / CCUG 14551 / JCM 1027 / KCTC 2358 / NCIMB 9240 / NCTC 8049).